The sequence spans 330 residues: Type II methyltransferase M.MthTI (330 aa).

The region spanning 3–328 (MDIASFFSGA…KKIKKDLEGV (326 aa)) is the SAM-dependent MTase C5-type domain. Cys73 is a catalytic residue.

This sequence belongs to the class I-like SAM-binding methyltransferase superfamily. C5-methyltransferase family.

It carries out the reaction a 2'-deoxycytidine in DNA + S-adenosyl-L-methionine = a 5-methyl-2'-deoxycytidine in DNA + S-adenosyl-L-homocysteine + H(+). A methylase that recognizes the double-stranded sequence 5'-GGCC-3', methylates C-3 on both strands, and protects the DNA from cleavage by the MthTI endonuclease. In Methanothermobacter thermautotrophicus (Methanobacterium thermoformicicum), this protein is Type II methyltransferase M.MthTI (mthTIM).